The sequence spans 494 residues: ATP synthase subunit beta (494 aa).

177 to 184 contacts ATP; that stretch reads GGAGVGKT.

This sequence belongs to the ATPase alpha/beta chains family. In terms of assembly, F-type ATPases have 2 components, CF(1) - the catalytic core - and CF(0) - the membrane proton channel. CF(1) has five subunits: alpha(3), beta(3), gamma(1), delta(1), epsilon(1). CF(0) has three main subunits: a(1), b(2) and c(9-12). The alpha and beta chains form an alternating ring which encloses part of the gamma chain. CF(1) is attached to CF(0) by a central stalk formed by the gamma and epsilon chains, while a peripheral stalk is formed by the delta and b chains.

It is found in the cell membrane. It carries out the reaction ATP + H2O + 4 H(+)(in) = ADP + phosphate + 5 H(+)(out). Functionally, produces ATP from ADP in the presence of a proton gradient across the membrane. The catalytic sites are hosted primarily by the beta subunits. The sequence is that of ATP synthase subunit beta from Bifidobacterium adolescentis (strain ATCC 15703 / DSM 20083 / NCTC 11814 / E194a).